The chain runs to 172 residues: Adenine phosphoribosyltransferase (172 aa).

Belongs to the purine/pyrimidine phosphoribosyltransferase family. In terms of assembly, homodimer.

The protein localises to the cytoplasm. The enzyme catalyses AMP + diphosphate = 5-phospho-alpha-D-ribose 1-diphosphate + adenine. It functions in the pathway purine metabolism; AMP biosynthesis via salvage pathway; AMP from adenine: step 1/1. In terms of biological role, catalyzes a salvage reaction resulting in the formation of AMP, that is energically less costly than de novo synthesis. The sequence is that of Adenine phosphoribosyltransferase from Streptococcus agalactiae serotype III (strain NEM316).